Consider the following 555-residue polypeptide: Potassium-transporting ATPase potassium-binding subunit (555 aa).

The next 10 membrane-spanning stretches (helical) occupy residues 2 to 22, 60 to 80, 130 to 150, 173 to 193, 246 to 266, 278 to 298, 374 to 394, 412 to 432, 483 to 503, and 525 to 545; these read IWVA…PTGI, QYAL…YFIF, IGIT…VMAF, VFLP…VPQT, MSNI…PFTY, ILFV…TTSE, AGFV…GLMV, LIAV…ALAL, LVMF…AASL, and GIFI…MLVL.

The protein belongs to the KdpA family. As to quaternary structure, the system is composed of three essential subunits: KdpA, KdpB and KdpC.

It localises to the cell membrane. Its function is as follows. Part of the high-affinity ATP-driven potassium transport (or Kdp) system, which catalyzes the hydrolysis of ATP coupled with the electrogenic transport of potassium into the cytoplasm. This subunit binds the extracellular potassium ions and delivers the ions to the membrane domain of KdpB through an intramembrane tunnel. The chain is Potassium-transporting ATPase potassium-binding subunit from Bacillus anthracis (strain A0248).